The chain runs to 514 residues: 2,3-bisphosphoglycerate-independent phosphoglycerate mutase (514 aa).

Mn(2+) is bound by residues Asp-14 and Ser-64. Ser-64 (phosphoserine intermediate) is an active-site residue. Substrate is bound by residues His-125, 155-156 (RD), Arg-187, Arg-193, 263-266 (RADR), and Lys-336. Residues Asp-403, His-407, Asp-444, His-445, and His-463 each coordinate Mn(2+).

This sequence belongs to the BPG-independent phosphoglycerate mutase family. As to quaternary structure, monomer. Mn(2+) serves as cofactor.

The catalysed reaction is (2R)-2-phosphoglycerate = (2R)-3-phosphoglycerate. Its pathway is carbohydrate degradation; glycolysis; pyruvate from D-glyceraldehyde 3-phosphate: step 3/5. Catalyzes the interconversion of 2-phosphoglycerate and 3-phosphoglycerate. In Salmonella choleraesuis (strain SC-B67), this protein is 2,3-bisphosphoglycerate-independent phosphoglycerate mutase.